The following is a 119-amino-acid chain: Ribonuclease P protein component (119 aa).

The protein belongs to the RnpA family. In terms of assembly, consists of a catalytic RNA component (M1 or rnpB) and a protein subunit.

The enzyme catalyses Endonucleolytic cleavage of RNA, removing 5'-extranucleotides from tRNA precursor.. Functionally, RNaseP catalyzes the removal of the 5'-leader sequence from pre-tRNA to produce the mature 5'-terminus. It can also cleave other RNA substrates such as 4.5S RNA. The protein component plays an auxiliary but essential role in vivo by binding to the 5'-leader sequence and broadening the substrate specificity of the ribozyme. The chain is Ribonuclease P protein component from Bacillus cereus (strain ATCC 14579 / DSM 31 / CCUG 7414 / JCM 2152 / NBRC 15305 / NCIMB 9373 / NCTC 2599 / NRRL B-3711).